Reading from the N-terminus, the 210-residue chain is 2-hydroxy-3-keto-5-methylthiopentenyl-1-phosphate phosphatase (210 aa).

The protein belongs to the HAD-like hydrolase superfamily. MtnX family.

The catalysed reaction is 2-hydroxy-5-methylsulfanyl-3-oxopent-1-enyl phosphate + H2O = 1,2-dihydroxy-5-(methylsulfanyl)pent-1-en-3-one + phosphate. The protein operates within amino-acid biosynthesis; L-methionine biosynthesis via salvage pathway; L-methionine from S-methyl-5-thio-alpha-D-ribose 1-phosphate: step 4/6. In terms of biological role, dephosphorylates 2-hydroxy-3-keto-5-methylthiopentenyl-1-phosphate (HK-MTPenyl-1-P) yielding 1,2-dihydroxy-3-keto-5-methylthiopentene (DHK-MTPene). This is 2-hydroxy-3-keto-5-methylthiopentenyl-1-phosphate phosphatase from Microcystis aeruginosa (strain NIES-843 / IAM M-2473).